Reading from the N-terminus, the 498-residue chain is Myotilin (498 aa).

Disordered regions lie at residues methionine 1 to glutamine 46, methionine 64 to glutamine 151, and glutamine 202 to aspartate 241. Arginine 20 carries the post-translational modification Omega-N-methylarginine. Residues serine 29–glutamine 43 are compositionally biased toward low complexity. The segment covering alanine 77–asparagine 138 has biased composition (polar residues). Positions serine 79–isoleucine 150 are necessary for interaction with ACTN1. Residues glutamine 202–glutamine 212 are compositionally biased toward low complexity. Residues serine 215 to tyrosine 493 form a necessary for interaction with FLNC region. The interval serine 215–leucine 498 is necessary for interaction with ACTA1. The span at valine 222–glycine 235 shows a compositional bias: polar residues. Ig-like C2-type domains lie at proline 250 to threonine 335 and proline 349 to threonine 441.

Belongs to the myotilin/palladin family. As to quaternary structure, homodimer. Interacts with ACTA1, ACTN1, FLNA, FLNB, FLNC and MYOZ2. Interacts with the C-terminal region of MYOZ1. As to expression, expressed in skeletal muscle (at protein level). Expressed in skeletal muscle, heart, bone marrow and thyroid gland.

Its subcellular location is the cell membrane. The protein resides in the sarcolemma. It localises to the cytoplasm. The protein localises to the cytoskeleton. It is found in the myofibril. Its subcellular location is the sarcomere. The protein resides in the z line. Its function is as follows. Component of a complex of multiple actin cross-linking proteins. Involved in the control of myofibril assembly and stability at the Z lines in muscle cells. This Homo sapiens (Human) protein is Myotilin (MYOT).